Reading from the N-terminus, the 509-residue chain is Heat shock 70 kDa protein 14 (509 aa).

Belongs to the heat shock protein 70 family. In terms of assembly, component of ribosome-associated complex (RAC), a heterodimer composed of Hsp70/DnaK-type chaperone HSPA14 and Hsp40/DnaJ-type chaperone DNAJC2.

It localises to the cytoplasm. The protein resides in the cytosol. In terms of biological role, component of the ribosome-associated complex (RAC), a complex involved in folding or maintaining nascent polypeptides in a folding-competent state. In the RAC complex, binds to the nascent polypeptide chain, while DNAJC2 stimulates its ATPase activity. This is Heat shock 70 kDa protein 14 (HSPA14) from Bos taurus (Bovine).